The following is a 211-amino-acid chain: Ribosomal RNA small subunit methyltransferase G (211 aa).

Residues G73, 125–126, and R141 contribute to the S-adenosyl-L-methionine site; that span reads IE.

Belongs to the methyltransferase superfamily. RNA methyltransferase RsmG family.

The protein resides in the cytoplasm. The catalysed reaction is guanosine(527) in 16S rRNA + S-adenosyl-L-methionine = N(7)-methylguanosine(527) in 16S rRNA + S-adenosyl-L-homocysteine. In terms of biological role, specifically methylates the N7 position of guanine in position 527 of 16S rRNA. The chain is Ribosomal RNA small subunit methyltransferase G from Methylobacterium radiotolerans (strain ATCC 27329 / DSM 1819 / JCM 2831 / NBRC 15690 / NCIMB 10815 / 0-1).